The following is a 596-amino-acid chain: ATP-dependent RNA helicase dbp3 (596 aa).

The segment covering 1–17 (MPKRTLEDTELNPRDNY) has biased composition (basic and acidic residues). Disordered stretches follow at residues 1-87 (MPKR…ESTS) and 115-139 (EEKV…QNGT). Positions 21 to 30 (SSKKSRKEKR) are enriched in basic residues. Positions 47–120 (IDIEVESKEA…KEGKEEKVDI (74 aa)) form a coiled coil. The segment covering 123-139 (STDSATPISVAPQQNGT) has biased composition (polar residues). Residues 180–207 (IKFDYLPITDSAQRAPFKDFKAPTPIQA) carry the Q motif motif. One can recognise a Helicase ATP-binding domain in the interval 210-386 (WPFLLAGRDV…STFMTSPVKI (177 aa)). 223-230 (AETGSGKT) contributes to the ATP binding site. The short motif at 332 to 335 (DEAD) is the DEAD box element. Positions 417 to 566 (RLMQLLKQYQ…PVPDELLKFG (150 aa)) constitute a Helicase C-terminal domain.

It belongs to the DEAD box helicase family. DDX5/DBP2 subfamily.

It localises to the nucleus. The protein resides in the nucleolus. The catalysed reaction is ATP + H2O = ADP + phosphate + H(+). ATP-dependent RNA helicase required for 60S ribosomal subunit synthesis. Involved in efficient pre-rRNA processing, predominantly at site A3, which is necessary for the normal formation of 25S and 5.8S rRNAs. In Sclerotinia sclerotiorum (strain ATCC 18683 / 1980 / Ss-1) (White mold), this protein is ATP-dependent RNA helicase dbp3 (dbp3).